Here is a 162-residue protein sequence, read N- to C-terminus: MVILGIDPGTAICGYGLIEVQGNRLSALAYGAVRTPAHTSQASRLQTIFTDLEAIIATYRPTHVAVEELFFNRNVTTALTVGQARGVILLAAARAGLSVHEYKPSQVKQAVVGYGRAEKQQVQQMVRVLLALEEIPKPDDVADALAVAICCAHSLTWGVACR.

Active-site residues include Asp-7, Glu-67, and Asp-140. Mg(2+)-binding residues include Asp-7, Glu-67, and Asp-140.

It belongs to the RuvC family. Homodimer which binds Holliday junction (HJ) DNA. The HJ becomes 2-fold symmetrical on binding to RuvC with unstacked arms; it has a different conformation from HJ DNA in complex with RuvA. In the full resolvosome a probable DNA-RuvA(4)-RuvB(12)-RuvC(2) complex forms which resolves the HJ. Mg(2+) is required as a cofactor.

Its subcellular location is the cytoplasm. It carries out the reaction Endonucleolytic cleavage at a junction such as a reciprocal single-stranded crossover between two homologous DNA duplexes (Holliday junction).. Functionally, the RuvA-RuvB-RuvC complex processes Holliday junction (HJ) DNA during genetic recombination and DNA repair. Endonuclease that resolves HJ intermediates. Cleaves cruciform DNA by making single-stranded nicks across the HJ at symmetrical positions within the homologous arms, yielding a 5'-phosphate and a 3'-hydroxyl group; requires a central core of homology in the junction. The consensus cleavage sequence is 5'-(A/T)TT(C/G)-3'. Cleavage occurs on the 3'-side of the TT dinucleotide at the point of strand exchange. HJ branch migration catalyzed by RuvA-RuvB allows RuvC to scan DNA until it finds its consensus sequence, where it cleaves and resolves the cruciform DNA. This is Crossover junction endodeoxyribonuclease RuvC from Heliobacterium modesticaldum (strain ATCC 51547 / Ice1).